The following is a 357-amino-acid chain: COP9 signalosome complex subunit 5a (357 aa).

An N-acetylmethionine modification is found at methionine 1. The MPN domain maps to 59–196; it reads VHISALALLK…IGAFRTYPEG (138 aa). Zn(2+) is bound by residues histidine 142, histidine 144, and aspartate 155. The JAMM motif motif lies at 142-155; the sequence is HSHPGYGCWLSGID. Residues 338-357 are disordered; the sequence is ARQSKKSADDSSDPEPMITS.

Belongs to the peptidase M67A family. CSN5 subfamily. Component of the CSN complex, probably composed of CSN1, CSN2, CSN3, CSN4, CSN5 (CSN5A or CSN5B), CSN6 (CSN6A or CSN6B), CSN7 and CSN8. CSN5A or CSN5B are present within distinct CSN complexes each containing only one copy of CSN5. Interacts with itself. In the complex, it is located in the center and probably interacts directly with CSN4 and CSN6A or CSN6B. Present also in subcomplex forms which inculdes CSN3. Also exists as monomeric form. Interacts with CYT1 in vitro, but not in planta. A divalent metal cation is required as a cofactor. Ubiquitously expressed. Highly expressed in flowers and roots. Expressed at lower level in seedlings and siliques.

The protein resides in the cytoplasm. The protein localises to the nucleus. Functionally, probable protease subunit of the COP9 signalosome complex (CSN), a complex involved in various cellular and developmental processes such as photomorphogenesis and auxin and jasmonate responses. The CSN complex is an essential regulator of the ubiquitin (Ubl) conjugation pathway by mediating the deneddylation of the cullin subunits of the SCF-type E3 ligase complexes, leading to decrease the Ubl ligase activity of SCF. In the complex, it probably acts as the catalytic center that mediates the cleavage of Nedd8 from cullins. It however has no metalloprotease activity by itself and requires the other subunits of the CSN complex. The CSN complex is involved in repression of photomorphogenesis in darkness by regulating the activity of COP1-containing Ubl ligase complexes. The complex is also required for degradation of PSIAA6 by regulating the activity of the Ubl ligase SCF-TIR complex. Involved in CSN's deneddylation/derubylation activity. Required for the deneddylation of all cullins. Essential for the structural integrity of the CSN holocomplex. The polypeptide is COP9 signalosome complex subunit 5a (Arabidopsis thaliana (Mouse-ear cress)).